Reading from the N-terminus, the 81-residue chain is Omega-conotoxin-like TxMKLT1-0223 (81 aa).

The signal sequence occupies residues 1 to 22; the sequence is MKLTCMMIVAVLFLTAWTFVTA. A propeptide spanning residues 23–52 is cleaved from the precursor; that stretch reads VPHSSNALENLYLKARHEMENPEASKLNTR. 3 disulfide bridges follow: Cys55–Cys72, Cys62–Cys76, and Cys71–Cys80.

The protein belongs to the conotoxin O1 superfamily. Expressed by the venom duct.

It localises to the secreted. Its function is as follows. Omega-conotoxins act at presynaptic membranes, they bind and block voltage-gated calcium channels (Cav). The polypeptide is Omega-conotoxin-like TxMKLT1-0223 (Conus textile (Cloth-of-gold cone)).